A 1026-amino-acid polypeptide reads, in one-letter code: Multidrug resistance protein MdtC (1026 aa).

11 consecutive transmembrane segments (helical) span residues 15 to 35 (ILIA…LPVA), 333 to 353 (EVEE…FLFL), 360 to 380 (LIPA…MYLC), 387 to 407 (LSLM…IVVL), 431 to 451 (VGFT…PLLL), 463 to 483 (FAVT…TLTP), 528 to 548 (LVGV…IAIP), 853 to 873 (LILI…LYES), 897 to 917 (LFNA…IGIV), 953 to 973 (PIMM…LSDG), and 984 to 1004 (ITIV…TPVV).

This sequence belongs to the resistance-nodulation-cell division (RND) (TC 2.A.6) family. MdtC subfamily. As to quaternary structure, part of a tripartite efflux system composed of MdtA, MdtB and MdtC. MdtC forms a heteromultimer with MdtB.

The protein resides in the cell inner membrane. This is Multidrug resistance protein MdtC from Salmonella paratyphi B (strain ATCC BAA-1250 / SPB7).